We begin with the raw amino-acid sequence, 682 residues long: Probable xyloglucan glycosyltransferase 6 (682 aa).

2 helical membrane-spanning segments follow: residues 109–129 (LIKG…AAYF) and 173–193 (IVLF…CFWI). Asp-260 is an active-site residue. The substrate site is built by Asp-319 and Asp-321. Asp-413 is an active-site residue. A run of 2 helical transmembrane segments spans residues 491–511 (LILP…TMFF) and 516–536 (LPSW…IIPA). Position 608 is a phosphoserine (Ser-608). A run of 2 helical transmembrane segments spans residues 632–651 (LYRT…VRSL) and 657–677 (IHFY…LDLI).

The protein belongs to the glycosyltransferase 2 family. Plant cellulose synthase-like C subfamily. Homodimer. Mainly expressed in flowers and seeds, and, to a lower extent, in seedlings, roots, leaves and stems.

Its subcellular location is the golgi apparatus membrane. Its function is as follows. Probable beta-1,4-glucan synthase rather involved in the synthesis of the xyloglucan backbone than cellulose. Seems to work simultaneously with xyloglucan 6-xylosyltransferase. Xyloglucan is a noncellulosic polysaccharides of plant cell wall and consists of a glucan backbone substituted by xylose, galactose and fucose. The protein is Probable xyloglucan glycosyltransferase 6 of Arabidopsis thaliana (Mouse-ear cress).